A 701-amino-acid chain; its full sequence is Translation factor GUF1, mitochondrial (701 aa).

A mitochondrion-targeting transit peptide spans 1–29 (MSCCKGLTPQCVRVRLPRRPALSHPARLY). The segment covering 23–50 (SHPARLYSSSSSSNSHSSPSRPRLLSRP) has biased composition (low complexity). The interval 23 to 85 (SHPARLYSSS…RSSHHSSAPM (63 aa)) is disordered. The region spanning 98-283 (ERYRNFCVIA…AVIEQIPHPT (186 aa)) is the tr-type G domain. Residues 107 to 114 (AHVDHGKS), 172 to 176 (DTPGH), and 226 to 229 (NKID) contribute to the GTP site.

Belongs to the TRAFAC class translation factor GTPase superfamily. Classic translation factor GTPase family. LepA subfamily.

The protein resides in the mitochondrion inner membrane. The enzyme catalyses GTP + H2O = GDP + phosphate + H(+). Promotes mitochondrial protein synthesis. May act as a fidelity factor of the translation reaction, by catalyzing a one-codon backward translocation of tRNAs on improperly translocated ribosomes. Binds to mitochondrial ribosomes in a GTP-dependent manner. This chain is Translation factor GUF1, mitochondrial, found in Pyricularia oryzae (strain 70-15 / ATCC MYA-4617 / FGSC 8958) (Rice blast fungus).